We begin with the raw amino-acid sequence, 198 residues long: Small ribosomal subunit protein uS2 (198 aa).

This sequence belongs to the universal ribosomal protein uS2 family.

In Methanobrevibacter smithii (strain ATCC 35061 / DSM 861 / OCM 144 / PS), this protein is Small ribosomal subunit protein uS2.